We begin with the raw amino-acid sequence, 331 residues long: tRNA uridine(34) hydroxylase (331 aa).

A Rhodanese domain is found at 123–217; sequence TDPEVLLIDT…YLEDVPQEES (95 aa). Cys-177 functions as the Cysteine persulfide intermediate in the catalytic mechanism. The interval 293-331 is disordered; that stretch reads KSRGEEHIGSEAAKAIKKRQAEKKLKRKNYHQHLTQGAE. Basic residues predominate over residues 307 to 323; the sequence is AIKKRQAEKKLKRKNYH.

Belongs to the TrhO family.

The catalysed reaction is uridine(34) in tRNA + AH2 + O2 = 5-hydroxyuridine(34) in tRNA + A + H2O. Catalyzes oxygen-dependent 5-hydroxyuridine (ho5U) modification at position 34 in tRNAs. In Hahella chejuensis (strain KCTC 2396), this protein is tRNA uridine(34) hydroxylase.